The sequence spans 650 residues: Aminopeptidase B (650 aa).

Gly-298 to Asn-302 provides a ligand contact to substrate. His-325 serves as a coordination point for Zn(2+). The Proton acceptor role is filled by Glu-326. His-329 and Glu-348 together coordinate Zn(2+). The residue at position 446 (Lys-446) is an N6-acetyllysine.

This sequence belongs to the peptidase M1 family. Monomer. It depends on Zn(2+) as a cofactor.

The protein resides in the secreted. The enzyme catalyses Release of N-terminal Arg and Lys from oligopeptides when P1' is not Pro. Also acts on arylamides of Arg and Lys.. In terms of biological role, exopeptidase which selectively removes arginine and/or lysine residues from the N-terminus of several peptide substrates including Arg(0)-Leu-enkephalin, Arg(0)-Met-enkephalin and Arg(-1)-Lys(0)-somatostatin-14. Can hydrolyze leukotriene A4 (LTA-4) into leukotriene B4 (LTB-4). The chain is Aminopeptidase B (Rnpep) from Mus musculus (Mouse).